Reading from the N-terminus, the 373-residue chain is Phosphoserine aminotransferase (373 aa).

Arg46 provides a ligand contact to L-glutamate. Pyridoxal 5'-phosphate-binding residues include Phe104, Thr150, Asp172, and Gln195. At Lys196 the chain carries N6-(pyridoxal phosphate)lysine. Residue 247–248 (NT) coordinates pyridoxal 5'-phosphate.

Belongs to the class-V pyridoxal-phosphate-dependent aminotransferase family. SerC subfamily. In terms of assembly, homodimer. The cofactor is pyridoxal 5'-phosphate.

Its subcellular location is the cytoplasm. It catalyses the reaction O-phospho-L-serine + 2-oxoglutarate = 3-phosphooxypyruvate + L-glutamate. The catalysed reaction is 4-(phosphooxy)-L-threonine + 2-oxoglutarate = (R)-3-hydroxy-2-oxo-4-phosphooxybutanoate + L-glutamate. The protein operates within amino-acid biosynthesis; L-serine biosynthesis; L-serine from 3-phospho-D-glycerate: step 2/3. It functions in the pathway cofactor biosynthesis; pyridoxine 5'-phosphate biosynthesis; pyridoxine 5'-phosphate from D-erythrose 4-phosphate: step 3/5. In terms of biological role, catalyzes the reversible conversion of 3-phosphohydroxypyruvate to phosphoserine and of 3-hydroxy-2-oxo-4-phosphonooxybutanoate to phosphohydroxythreonine. This Rhodococcus opacus (strain B4) protein is Phosphoserine aminotransferase.